The sequence spans 494 residues: Glutamyl-tRNA(Gln) amidotransferase subunit A (494 aa).

Catalysis depends on charge relay system residues K81 and S156. Catalysis depends on S180, which acts as the Acyl-ester intermediate.

The protein belongs to the amidase family. GatA subfamily. As to quaternary structure, heterotrimer of A, B and C subunits.

The enzyme catalyses L-glutamyl-tRNA(Gln) + L-glutamine + ATP + H2O = L-glutaminyl-tRNA(Gln) + L-glutamate + ADP + phosphate + H(+). Functionally, allows the formation of correctly charged Gln-tRNA(Gln) through the transamidation of misacylated Glu-tRNA(Gln) in organisms which lack glutaminyl-tRNA synthetase. The reaction takes place in the presence of glutamine and ATP through an activated gamma-phospho-Glu-tRNA(Gln). The chain is Glutamyl-tRNA(Gln) amidotransferase subunit A from Mycobacterium bovis (strain ATCC BAA-935 / AF2122/97).